Reading from the N-terminus, the 196-residue chain is RNA polymerase II subunit B1 CTD phosphatase RTR2 (196 aa).

The segment at 52-123 (YLARLLSPMS…LSQTPLHERR (72 aa)) adopts an RTR1-type zinc-finger fold. Residues Cys75, Cys80, Cys99, and His103 each coordinate Zn(2+).

Belongs to the RPAP2 family.

Its subcellular location is the cytoplasm. It localises to the nucleus. The catalysed reaction is O-phospho-L-seryl-[protein] + H2O = L-seryl-[protein] + phosphate. The enzyme catalyses O-phospho-L-threonyl-[protein] + H2O = L-threonyl-[protein] + phosphate. In terms of biological role, probable RNA polymerase II subunit B1 C-terminal domain (CTD) phosphatase that regulates RNA polymerase II transcription. May have functional redundancy with RTR1. The sequence is that of RNA polymerase II subunit B1 CTD phosphatase RTR2 (RTR2) from Saccharomyces cerevisiae (strain ATCC 204508 / S288c) (Baker's yeast).